A 670-amino-acid chain; its full sequence is Sodium, potassium, lithium and rubidium/H(+) antiporter (670 aa).

Transmembrane regions (helical) follow at residues 5-27 (LVVL…IPFI), 46-66 (GLHF…PLLF), 83-103 (PILL…GYTI), 105-125 (WMIP…LSPT), 156-176 (ASGL…AFSL), 182-202 (SFVF…FLII), 228-248 (FVIY…VVAG), 276-296 (IILF…IPDV), 314-334 (YILV…LFFW), 355-375 (LLIS…FSIP), and 389-409 (LILF…TVVL).

The protein belongs to the monovalent cation:proton antiporter 1 (CPA1) transporter (TC 2.A.36) family. Nhak (TC 2.A.36.3.2) subfamily.

It is found in the cell membrane. Transporter involved in the efflux of sodium, potassium, lithium and rubidium. This is Sodium, potassium, lithium and rubidium/H(+) antiporter (nhaK) from Bacillus subtilis (strain 168).